A 156-amino-acid polypeptide reads, in one-letter code: MATQNGGPTQNAAPSLNVLAQYIKDFSFENPNAPRSLAAPPSQPDVNIQIHVNARPGGNGEFEVELKIDGGASIEGNTLFAFELVYAGVFRILNVPEESLQPVALIECPRLLFPFARQIIADAVRNGGFPPLMIDPVDFAALFQQRMQQEGQRIQA.

Belongs to the SecB family. In terms of assembly, homotetramer, a dimer of dimers. One homotetramer interacts with 1 SecA dimer.

It localises to the cytoplasm. Functionally, one of the proteins required for the normal export of preproteins out of the cell cytoplasm. It is a molecular chaperone that binds to a subset of precursor proteins, maintaining them in a translocation-competent state. It also specifically binds to its receptor SecA. This is Protein-export protein SecB from Xanthobacter autotrophicus (strain ATCC BAA-1158 / Py2).